Reading from the N-terminus, the 287-residue chain is 2-dehydro-3-deoxyphosphooctonate aldolase (287 aa).

Belongs to the KdsA family.

The protein localises to the cytoplasm. It carries out the reaction D-arabinose 5-phosphate + phosphoenolpyruvate + H2O = 3-deoxy-alpha-D-manno-2-octulosonate-8-phosphate + phosphate. It participates in carbohydrate biosynthesis; 3-deoxy-D-manno-octulosonate biosynthesis; 3-deoxy-D-manno-octulosonate from D-ribulose 5-phosphate: step 2/3. It functions in the pathway bacterial outer membrane biogenesis; lipopolysaccharide biosynthesis. The sequence is that of 2-dehydro-3-deoxyphosphooctonate aldolase from Rhodopseudomonas palustris (strain ATCC BAA-98 / CGA009).